The chain runs to 153 residues: Hsp90 co-chaperone HCH1 (153 aa).

This sequence belongs to the AHA1 family. As to quaternary structure, monomer. Interacts with HSP82.

It is found in the cytoplasm. The protein resides in the nucleus. Functionally, co-chaperone that binds to the molecular chaperone HSP82 and stimulates its ATPase activity. Although not essential, it confers thermotolerance when intracellular levels of HSP82 are limiting. The polypeptide is Hsp90 co-chaperone HCH1 (HCH1) (Saccharomyces cerevisiae (strain ATCC 204508 / S288c) (Baker's yeast)).